Here is a 341-residue protein sequence, read N- to C-terminus: Methionine import ATP-binding protein MetN 1 (341 aa).

The region spanning 2–241 (IEFRQVSKTF…PKTTIAQNFV (240 aa)) is the ABC transporter domain. 38–45 (GYSGAGKS) provides a ligand contact to ATP.

Belongs to the ABC transporter superfamily. Methionine importer (TC 3.A.1.24) family. The complex is composed of two ATP-binding proteins (MetN), two transmembrane proteins (MetI) and a solute-binding protein (MetQ).

It localises to the cell membrane. The catalysed reaction is L-methionine(out) + ATP + H2O = L-methionine(in) + ADP + phosphate + H(+). It catalyses the reaction D-methionine(out) + ATP + H2O = D-methionine(in) + ADP + phosphate + H(+). Functionally, part of the ABC transporter complex MetNIQ involved in methionine import. Responsible for energy coupling to the transport system. The sequence is that of Methionine import ATP-binding protein MetN 1 from Staphylococcus aureus (strain MW2).